The sequence spans 94 residues: MRTLTLLTALLLLALHTQAKSPQGTAEEAPDQEQLVMEDQDISISFGGDKGTALQDADVKAGVTCYCRRTRCGFRERLSGACGYRGRIYRLCCR.

Positions 1–19 (MRTLTLLTALLLLALHTQA) are cleaved as a signal peptide. Residues 20-62 (KSPQGTAEEAPDQEQLVMEDQDISISFGGDKGTALQDADVKAG) constitute a propeptide that is removed on maturation. Intrachain disulfides connect Cys65–Cys93, Cys67–Cys82, and Cys72–Cys92. Tyr84 bears the Phosphotyrosine mark.

The protein belongs to the alpha-defensin family. As to expression, highest expression in bone marrow and to a much lesser extent in small intestine.

Its subcellular location is the secreted. Functionally, active in vitro against S.aureus, fungi, Gram-positive and Gram-negative bacteria and to a lesser extent against an enveloped virus. The sequence is that of Neutrophil antibiotic peptide NP-1 from Rattus norvegicus (Rat).